Consider the following 146-residue polypeptide: Snake venom vascular endothelial growth factor toxin (146 aa).

Residues 1–24 (MAAYLLAVAILFCIQGWPLGTVQG) form the signal peptide. Glutamine 25 carries the pyrrolidone carboxylic acid modification. 3 disulfide bridges follow: cysteine 38/cysteine 80, cysteine 69/cysteine 115, and cysteine 73/cysteine 117. Positions 119-146 (PRSASGVNSRKHKRNPEEGEPRAKFPFV) are disordered. Residues 133-146 (NPEEGEPRAKFPFV) show a composition bias toward basic and acidic residues.

Belongs to the PDGF/VEGF growth factor family. Snake venom VEGF subfamily. In terms of assembly, homodimer; disulfide-linked. Interacts with VEGF receptor-1 (FLT1) with a high affinity, whereas it binds to VEGF receptor-2 (KDR) with a low affinity. Does not bind VEGF receptor-3 (FLT4). As to expression, expressed by the venom gland.

The protein localises to the secreted. Snake venom VEGFs may contribute to venom dispersion and prey subjugation by inducing vascular permeability and hypotension. This protein induces vascular permeability probably through VEGF (VEGFR) signaling. This protein also induces a drastic hypotensive effect after intravenous injection. The hypotension is mediated by nitric oxide (NO), which is produced by VEGF-activated endothelium NO synthase. Also induces angiogenesis in vitro. Like other crotalid VEGFs, this protein interacts with VEGF receptor-1 (FLT1) with a high affinity, whereas it binds to VEGF receptor-2 (KDR) with a low affinity. This is Snake venom vascular endothelial growth factor toxin from Bothrops insularis (Golden lancehead).